A 551-amino-acid chain; its full sequence is DNA double-strand break repair helicase HerA (551 aa).

ATP contacts are provided by residues Arg-152, 161-166, and 507-508; these read GAGKSN and RI.

It belongs to the HerA family. In terms of assembly, homohexamer. Interacts with NurA.

It carries out the reaction Couples ATP hydrolysis with the unwinding of duplex DNA at the replication fork by translocating in the 5'-3' direction. This creates two antiparallel DNA single strands (ssDNA). The leading ssDNA polymer is the template for DNA polymerase III holoenzyme which synthesizes a continuous strand.. It catalyses the reaction ATP + H2O = ADP + phosphate + H(+). The enzyme catalyses Couples ATP hydrolysis with the unwinding of duplex DNA by translocating in the 3'-5' direction.. Its activity is regulated as follows. Helicase activity is stimulated in the presence of NurA. Its function is as follows. Involved in DNA double-strand break (DSB) repair. Probably acts with NurA to stimulate resection of the 5' strand and produce the long 3' single-strand that is required for RadA loading. Has DNA-dependent ATPase activity and DNA helicase activity. This is DNA double-strand break repair helicase HerA from Pyrococcus furiosus (strain ATCC 43587 / DSM 3638 / JCM 8422 / Vc1).